The following is a 470-amino-acid chain: 5-hydroxytryptamine receptor 2A (470 aa).

Topologically, residues 1-80 (MDILCEENTS…LQEKNWSALL (80 aa)) are extracellular. A glycan (N-linked (GlcNAc...) asparagine) is linked at Asn-38. The helical transmembrane segment at 81-97 (TAVVIILTIAGNILVIM) threads the bilayer. The Cytoplasmic portion of the chain corresponds to 98–111 (AVSLEKKLQNATNY). Residues 112 to 137 (FLMSLAIADMLLGFLVMPVSTLTILY) form a helical membrane-spanning segment. Residues 138-146 (GYRWPLPSK) lie on the Extracellular side of the membrane. The chain crosses the membrane as a helical span at residues 147-171 (LCAVWIYLDVLFSTASIMHLCAISL). Cys-148 and Cys-227 are joined by a disulfide. A serotonin-binding site is contributed by Asp-155. The short motif at 172-174 (DRY) is the DRY motif; important for ligand-induced conformation changes element. Residues 172 to 191 (DRYVAIQNPIHHSRFNSRTK) lie on the Cytoplasmic side of the membrane. The chain crosses the membrane as a helical span at residues 192–215 (AFLKIIAVWTISVGISMPIPVFGL). Residues 216-232 (QDDSKVFKEGSCLLADE) are Extracellular-facing. Residues 233–258 (NFVLIGSFVAFFIPLTIMVITYFLTI) traverse the membrane as a helical segment. Over 259 to 321 (KSLQKEATLC…QSISNEQKAC (63 aa)) the chain is Cytoplasmic. Position 280 is a phosphoserine (Ser-280). A helical membrane pass occupies residues 322–347 (KVLGIVFFLFVVMWCPFFITNIMAVI). Asn-342 is a serotonin binding site. A disulfide bond links Cys-348 and Cys-352. Residues 348-355 (CKESCNRD) lie on the Extracellular side of the membrane. The helical transmembrane segment at 356–381 (VIEALLNVFVWIGYLSSAVNPLVYTL) threads the bilayer. The NPxxY motif; important for ligand-induced conformation changes and signaling motif lies at 375-379 (NPLVY). The Cytoplasmic segment spans residues 382–470 (FNKTYRSAFS…NTVNEKVSCV (89 aa)). A disordered region spans residues 424–470 (QMGPKKNSKKDDKTTDNDCTMVALGKEHPEDAPADSSNTVNEKVSCV). Polar residues predominate over residues 458–470 (DSSNTVNEKVSCV). The PDZ-binding signature appears at 468 to 470 (SCV).

Belongs to the G-protein coupled receptor 1 family. As to quaternary structure, interacts (via C-terminus) with MPDZ and PATJ. May interact (via C-terminus) with MPP3, PRDX6, DLG4, DLG1, CASK, APBA1 and MAGI2. Interacts with GRM2 and DRD2; this may affect signaling.

It is found in the cell membrane. The protein localises to the cell projection. Its subcellular location is the dendrite. The protein resides in the axon. It localises to the cytoplasmic vesicle. It is found in the membrane. The protein localises to the caveola. Its subcellular location is the presynapse. Its activity is regulated as follows. G-protein coupled receptor activity is regulated by lipids: oleamide increases HTR2A-mediated activity. Functionally, G-protein coupled receptor for 5-hydroxytryptamine (serotonin). Also functions as a receptor for various drugs and psychoactive substances, including mescaline, psilocybin, 1-(2,5-dimethoxy-4-iodophenyl)-2-aminopropane (DOI) and lysergic acid diethylamide (LSD). Ligand binding causes a conformation change that triggers signaling via guanine nucleotide-binding proteins (G proteins) and modulates the activity of downstream effectors. HTR2A is coupled to G(q)/G(11) G alpha proteins and activates phospholipase C-beta, releasing diacylglycerol (DAG) and inositol 1,4,5-trisphosphate (IP3) second messengers that modulate the activity of phosphatidylinositol 3-kinase and promote the release of Ca(2+) ions from intracellular stores, respectively. Beta-arrestin family members inhibit signaling via G proteins and mediate activation of alternative signaling pathways. Affects neural activity, perception, cognition and mood. Plays a role in the regulation of behavior, including responses to anxiogenic situations and psychoactive substances. Plays a role in intestinal smooth muscle contraction, and may play a role in arterial vasoconstriction. The sequence is that of 5-hydroxytryptamine receptor 2A (HTR2A) from Bos taurus (Bovine).